The sequence spans 232 residues: Ribonuclease P protein component 3 (232 aa).

The protein belongs to the eukaryotic/archaeal RNase P protein component 3 family. Consists of a catalytic RNA component and at least 4-5 protein subunits.

The protein resides in the cytoplasm. It carries out the reaction Endonucleolytic cleavage of RNA, removing 5'-extranucleotides from tRNA precursor.. Its function is as follows. Part of ribonuclease P, a protein complex that generates mature tRNA molecules by cleaving their 5'-ends. The sequence is that of Ribonuclease P protein component 3 from Methanococcus maripaludis (strain C7 / ATCC BAA-1331).